The sequence spans 698 residues: Probable Xaa-Pro aminopeptidase P (698 aa).

4 residues coordinate Mn(2+): aspartate 509, aspartate 520, glutamate 604, and glutamate 618.

The protein belongs to the peptidase M24B family. The cofactor is Mn(2+).

The enzyme catalyses Release of any N-terminal amino acid, including proline, that is linked to proline, even from a dipeptide or tripeptide.. Functionally, catalyzes the removal of a penultimate prolyl residue from the N-termini of peptides. In Trichophyton verrucosum (strain HKI 0517), this protein is Probable Xaa-Pro aminopeptidase P (AMPP).